A 360-amino-acid chain; its full sequence is RGG repeats nuclear RNA binding protein B (360 aa).

2 disordered regions span residues 1–216 (MASV…DKEM) and 250–360 (MQQL…TLGK). A2 carries the post-translational modification N-acetylalanine. The span at 58 to 77 (PGGGRGAGRGGSYGRGGRGG) shows a compositional bias: gly residues. Composition is skewed to basic and acidic residues over residues 99-108 (RRSEEGDGAR) and 132-157 (DSER…RDGA). The segment covering 162 to 176 (WGTTQDDITPVTEES) has biased composition (polar residues). Composition is skewed to basic and acidic residues over residues 184-216 (LTVE…DKEM), 258-283 (SNND…EKTR), and 311-336 (REGR…RNQR). One can recognise an FF domain in the interval 223 to 288 (KVLEEKKKAL…EEKTRKSLSI (66 aa)). S258 carries the post-translational modification Phosphoserine.

Belongs to the SERBP1-HABP4 family.

Its subcellular location is the nucleus. The protein resides in the cytoplasm. It is found in the perinuclear region. Functionally, ribosome-binding protein that acts as a regulator of mRNA translation by promoting ribosome inactivation. Binds RNA. This chain is RGG repeats nuclear RNA binding protein B, found in Arabidopsis thaliana (Mouse-ear cress).